We begin with the raw amino-acid sequence, 187 residues long: Putative gamma-glutamylcyclotransferase At3g02910 (187 aa).

17 to 20 contacts substrate; the sequence is YGTL. The active-site Proton acceptor is the Glu92.

Belongs to the gamma-glutamylcyclotransferase family.

Putative gamma-glutamylcyclotransferase. The sequence is that of Putative gamma-glutamylcyclotransferase At3g02910 from Arabidopsis thaliana (Mouse-ear cress).